Here is a 518-residue protein sequence, read N- to C-terminus: MFS-type transporter cnsO (518 aa).

Positions 1–13 are enriched in polar residues; sequence MESTDSSPPLSMT. The interval 1-24 is disordered; it reads MESTDSSPPLSMTDTEKKGDAVTT. The next 9 membrane-spanning stretches (helical) occupy residues 99–119, 122–142, 156–176, 187–207, 221–241, 298–318, 334–354, 362–382, and 392–412; these read LALMYFFFTYGLSEPVSNIML, VGPKIWFPFIVCAWGLITTLT, LMLGITEAGLYPGAYFILSMW, AIFYGANTTAGAFGGVIAYGV, WLFLIEGCITIFAGLACLFCL, FMMMLFWWGGSVPTYSLSYTL, VMTTPPYIFATCVCVAVGYIS, LCIMGAYTLGLIGIIILWITV, and YFAIFLAAAGYSAQAPIVGAW. N-linked (GlcNAc...) asparagine glycosylation occurs at N416. The next 2 helical transmembrane spans lie at 427–447 and 455–475; these read IGLLMLLGSVGGGSIGSNIYI and PLGFGFSVGATVLGAMIPATI.

Belongs to the major facilitator superfamily.

It localises to the cell membrane. MFS-type transporter; part of the gene cluster that mediates the biosynthesis of communesins, a prominent class of indole alkaloids with great potential as pharmaceuticals. With the MFS transporter cnsL, is most likely responsible for cummunesins secretion and thereby may contribute to intrinsic resistance. In Penicillium expansum (Blue mold rot fungus), this protein is MFS-type transporter cnsO.